Reading from the N-terminus, the 441-residue chain is Ribulose bisphosphate carboxylase large chain (441 aa).

Substrate contacts are provided by Asn89 and Thr139. The active-site Proton acceptor is the Lys141. Residue Lys143 coordinates substrate. Residues Lys167, Asp169, and Glu170 each contribute to the Mg(2+) site. Residue Lys167 is modified to N6-carboxylysine. Residue His260 is the Proton acceptor of the active site. Substrate is bound by residues Arg261, His293, and Ser345.

This sequence belongs to the RuBisCO large chain family. Type I subfamily. In terms of assembly, heterohexadecamer of 8 large chains and 8 small chains; disulfide-linked. The disulfide link is formed within the large subunit homodimers. Mg(2+) serves as cofactor. In terms of processing, the disulfide bond which can form in the large chain dimeric partners within the hexadecamer appears to be associated with oxidative stress and protein turnover.

It localises to the plastid. The protein localises to the chloroplast. It carries out the reaction 2 (2R)-3-phosphoglycerate + 2 H(+) = D-ribulose 1,5-bisphosphate + CO2 + H2O. The enzyme catalyses D-ribulose 1,5-bisphosphate + O2 = 2-phosphoglycolate + (2R)-3-phosphoglycerate + 2 H(+). Its function is as follows. RuBisCO catalyzes two reactions: the carboxylation of D-ribulose 1,5-bisphosphate, the primary event in carbon dioxide fixation, as well as the oxidative fragmentation of the pentose substrate in the photorespiration process. Both reactions occur simultaneously and in competition at the same active site. This is Ribulose bisphosphate carboxylase large chain from Polemonium reptans (Greek valerian).